The primary structure comprises 369 residues: Protein RecA (369 aa).

Over residues 1–10 (MARTTDDSKK) the composition is skewed to basic and acidic residues. Positions 1-20 (MARTTDDSKKAAPAAGTADE) are disordered. 82–89 (GPESSGKT) is an ATP binding site. The interval 350-369 (PAAAVAAPDEGDDDLGDEEV) is disordered. Acidic residues predominate over residues 358–369 (DEGDDDLGDEEV).

Belongs to the RecA family.

Its subcellular location is the cytoplasm. Functionally, can catalyze the hydrolysis of ATP in the presence of single-stranded DNA, the ATP-dependent uptake of single-stranded DNA by duplex DNA, and the ATP-dependent hybridization of homologous single-stranded DNAs. It interacts with LexA causing its activation and leading to its autocatalytic cleavage. The polypeptide is Protein RecA (Gloeobacter violaceus (strain ATCC 29082 / PCC 7421)).